The primary structure comprises 1050 residues: MDS1 and EVI1 complex locus protein EVI1-B (1050 aa).

C2H2-type zinc fingers lie at residues 21-48 (YHCE…GTPH), 75-97 (HECK…LLSH), and 103-125 (YKCD…QMSH). The C2H2-type 4; degenerate zinc finger occupies 131–155 (YECENCSKQVFTDPSNLQRHIRSQH). 2 C2H2-type zinc fingers span residues 161–183 (HACS…KHIH) and 189–211 (FVCE…KRMH). The segment at 218–240 (IKCKDCGQMFSTTSSLNKHRRFC) adopts a C2H2-type 7; atypical zinc-finger fold. 2 disordered regions span residues 371 to 421 (ITEN…SDKD) and 529 to 612 (PLKV…EKKD). A compositionally biased stretch (basic and acidic residues) spans 379-390 (RPHEKVSDHSES). Positions 397–411 (STPSGSDLETTSGSD) are enriched in polar residues. The Nuclear localization signal signature appears at 420-433 (KDKLKENGKLYKDK). A compositionally biased stretch (basic and acidic residues) spans 529–542 (PLKVEPESPKESKK). The CTBP-binding motif 1 signature appears at 551–555 (AFDLT). Positions 564–576 (SPNAPSKSSAPTS) are enriched in low complexity. A CTBP-binding motif 2 motif is present at residues 582 to 586 (PLDLS). A compositionally biased stretch (polar residues) spans 588–598 (GSRSRATTTKQ). Residues 599 to 612 (TESRKNHIFGEKKD) show a composition bias toward basic and acidic residues. 3 consecutive C2H2-type zinc fingers follow at residues 731–753 (YTCR…LRTH), 759–782 (YRCK…RNIH), and 788–810 (FKCH…LKKH). The interval 928–951 (KSEVNCKVSPSRHDDDDDDEEEDF) is disordered.

Homooligomer. Interacts with ctbp.

The protein localises to the nucleus. It is found in the nucleus speckle. Its function is as follows. Transcriptional repressor during pronephros development. Plays a role in regionalization of the pronephros; may promote formation of the distal tubule and duct over formation of the glomus and proximal tubule. The polypeptide is MDS1 and EVI1 complex locus protein EVI1-B (mecom-b) (Xenopus laevis (African clawed frog)).